Here is a 190-residue protein sequence, read N- to C-terminus: Xanthine phosphoribosyltransferase (190 aa).

2 residues coordinate xanthine: Leu-20 and Asn-27. A 5-phospho-alpha-D-ribose 1-diphosphate-binding site is contributed by 128-132; sequence ANGKA. Position 156 (Lys-156) interacts with xanthine.

The protein belongs to the purine/pyrimidine phosphoribosyltransferase family. Xpt subfamily. As to quaternary structure, homodimer.

It is found in the cytoplasm. The catalysed reaction is XMP + diphosphate = xanthine + 5-phospho-alpha-D-ribose 1-diphosphate. Its pathway is purine metabolism; XMP biosynthesis via salvage pathway; XMP from xanthine: step 1/1. Functionally, converts the preformed base xanthine, a product of nucleic acid breakdown, to xanthosine 5'-monophosphate (XMP), so it can be reused for RNA or DNA synthesis. The chain is Xanthine phosphoribosyltransferase from Ruminiclostridium cellulolyticum (strain ATCC 35319 / DSM 5812 / JCM 6584 / H10) (Clostridium cellulolyticum).